The following is a 447-amino-acid chain: N-succinylarginine dihydrolase (447 aa).

Residues 19–28 (AGLSFGNEAS), Asn110, and 137–138 (HR) each bind substrate. Glu174 is a catalytic residue. Substrate is bound at residue Arg212. The active site involves His248. Residues Asp250 and Asn359 each coordinate substrate. Cys365 (nucleophile) is an active-site residue.

This sequence belongs to the succinylarginine dihydrolase family. As to quaternary structure, homodimer.

It catalyses the reaction N(2)-succinyl-L-arginine + 2 H2O + 2 H(+) = N(2)-succinyl-L-ornithine + 2 NH4(+) + CO2. It functions in the pathway amino-acid degradation; L-arginine degradation via AST pathway; L-glutamate and succinate from L-arginine: step 2/5. In terms of biological role, catalyzes the hydrolysis of N(2)-succinylarginine into N(2)-succinylornithine, ammonia and CO(2). The protein is N-succinylarginine dihydrolase of Salmonella agona (strain SL483).